The following is a 493-amino-acid chain: 3-octaprenyl-4-hydroxybenzoate carboxy-lyase (493 aa).

N172 serves as a coordination point for Mn(2+). Residues 175–177, 189–191, and 194–195 contribute to the prenylated FMN site; these read IYR, RWL, and RG. E238 serves as a coordination point for Mn(2+). The active-site Proton donor is the D287.

This sequence belongs to the UbiD family. Homohexamer. The cofactor is prenylated FMN. Mn(2+) serves as cofactor.

It localises to the cell membrane. It catalyses the reaction a 4-hydroxy-3-(all-trans-polyprenyl)benzoate + H(+) = a 2-(all-trans-polyprenyl)phenol + CO2. It functions in the pathway cofactor biosynthesis; ubiquinone biosynthesis. Its function is as follows. Catalyzes the decarboxylation of 3-octaprenyl-4-hydroxy benzoate to 2-octaprenylphenol, an intermediate step in ubiquinone biosynthesis. In Cellvibrio japonicus (strain Ueda107) (Pseudomonas fluorescens subsp. cellulosa), this protein is 3-octaprenyl-4-hydroxybenzoate carboxy-lyase.